We begin with the raw amino-acid sequence, 228 residues long: 30 kDa heat shock protein (228 aa).

Disordered stretches follow at residues 34 to 53 (EVQGSAPETGSRRHTQPTRT), 117 to 136 (KGEPHSPAAHHATVEDDVDE), and 144 to 174 (TATGANNQNNQQVAQRASAPTTEEKPKAPAE). One can recognise a sHSP domain in the interval 49–228 (QPTRTFSPKF…KHETIRIAIN (180 aa)). The segment covering 144–158 (TATGANNQNNQQVAQ) has biased composition (low complexity).

It belongs to the small heat shock protein (HSP20) family.

It localises to the cytoplasm. The sequence is that of 30 kDa heat shock protein (hsp30) from Neurospora crassa (strain ATCC 24698 / 74-OR23-1A / CBS 708.71 / DSM 1257 / FGSC 987).